We begin with the raw amino-acid sequence, 311 residues long: Aspartate carbamoyltransferase catalytic subunit (311 aa).

Residues arginine 55 and threonine 56 each coordinate carbamoyl phosphate. An L-aspartate-binding site is contributed by lysine 85. Carbamoyl phosphate-binding residues include arginine 106, histidine 135, and glutamine 138. L-aspartate is bound by residues arginine 168 and arginine 230. Leucine 268 and proline 269 together coordinate carbamoyl phosphate.

Belongs to the aspartate/ornithine carbamoyltransferase superfamily. ATCase family. In terms of assembly, heterododecamer (2C3:3R2) of six catalytic PyrB chains organized as two trimers (C3), and six regulatory PyrI chains organized as three dimers (R2).

The catalysed reaction is carbamoyl phosphate + L-aspartate = N-carbamoyl-L-aspartate + phosphate + H(+). The protein operates within pyrimidine metabolism; UMP biosynthesis via de novo pathway; (S)-dihydroorotate from bicarbonate: step 2/3. Its function is as follows. Catalyzes the condensation of carbamoyl phosphate and aspartate to form carbamoyl aspartate and inorganic phosphate, the committed step in the de novo pyrimidine nucleotide biosynthesis pathway. This is Aspartate carbamoyltransferase catalytic subunit from Pectobacterium atrosepticum (strain SCRI 1043 / ATCC BAA-672) (Erwinia carotovora subsp. atroseptica).